The chain runs to 211 residues: 5-formyltetrahydrofolate cyclo-ligase (211 aa).

4–8 (KQLLR) is a binding site for ATP. Substrate is bound by residues Glu56 and 152 to 156 (HGAGY). ATP is bound by residues 151-158 (GHGAGYYD) and Asp194.

It belongs to the 5-formyltetrahydrofolate cyclo-ligase family. N-glycosylated.

It is found in the mitochondrion. It carries out the reaction (6S)-5-formyl-5,6,7,8-tetrahydrofolate + ATP = (6R)-5,10-methenyltetrahydrofolate + ADP + phosphate. Only enzyme known to utilize 5-formyltetrahydrofolate (folinic acid) as substrate. Contributes to tetrahydrofolate metabolism in an alternative way of folate biosynthesis. May regulate carbon flow through the folate-dependent one-carbon metabolic network that supplies carbon for the biosynthesis of purines, thymidine and amino acids. This Saccharomyces cerevisiae (strain ATCC 204508 / S288c) (Baker's yeast) protein is 5-formyltetrahydrofolate cyclo-ligase (FAU1).